Here is a 395-residue protein sequence, read N- to C-terminus: ATP phosphoribosyltransferase regulatory subunit (395 aa).

This sequence belongs to the class-II aminoacyl-tRNA synthetase family. HisZ subfamily. As to quaternary structure, heteromultimer composed of HisG and HisZ subunits.

The protein localises to the cytoplasm. It participates in amino-acid biosynthesis; L-histidine biosynthesis; L-histidine from 5-phospho-alpha-D-ribose 1-diphosphate: step 1/9. In terms of biological role, required for the first step of histidine biosynthesis. May allow the feedback regulation of ATP phosphoribosyltransferase activity by histidine. This chain is ATP phosphoribosyltransferase regulatory subunit, found in Pseudomonas savastanoi pv. phaseolicola (strain 1448A / Race 6) (Pseudomonas syringae pv. phaseolicola (strain 1448A / Race 6)).